The sequence spans 462 residues: Siroheme synthase (462 aa).

Residues 1–203 (MEYLPLFANL…GKWEHAEKEI (203 aa)) form a precorrin-2 dehydrogenase /sirohydrochlorin ferrochelatase region. NAD(+) contacts are provided by residues 22–23 (NV) and 43–44 (DD). The residue at position 128 (serine 128) is a Phosphoserine. The tract at residues 215–462 (GNVALVGAGP…NWFGKIIKEQ (248 aa)) is uroporphyrinogen-III C-methyltransferase. Position 224 (proline 224) interacts with S-adenosyl-L-methionine. Aspartate 247 (proton acceptor) is an active-site residue. Lysine 269 (proton donor) is an active-site residue. S-adenosyl-L-methionine-binding positions include 300 to 302 (GGD), isoleucine 305, 330 to 331 (TA), methionine 383, and glycine 412.

In the N-terminal section; belongs to the precorrin-2 dehydrogenase / sirohydrochlorin ferrochelatase family. The protein in the C-terminal section; belongs to the precorrin methyltransferase family.

The enzyme catalyses uroporphyrinogen III + 2 S-adenosyl-L-methionine = precorrin-2 + 2 S-adenosyl-L-homocysteine + H(+). It catalyses the reaction precorrin-2 + NAD(+) = sirohydrochlorin + NADH + 2 H(+). It carries out the reaction siroheme + 2 H(+) = sirohydrochlorin + Fe(2+). The protein operates within cofactor biosynthesis; adenosylcobalamin biosynthesis; precorrin-2 from uroporphyrinogen III: step 1/1. Its pathway is cofactor biosynthesis; adenosylcobalamin biosynthesis; sirohydrochlorin from precorrin-2: step 1/1. It functions in the pathway porphyrin-containing compound metabolism; siroheme biosynthesis; precorrin-2 from uroporphyrinogen III: step 1/1. It participates in porphyrin-containing compound metabolism; siroheme biosynthesis; siroheme from sirohydrochlorin: step 1/1. The protein operates within porphyrin-containing compound metabolism; siroheme biosynthesis; sirohydrochlorin from precorrin-2: step 1/1. Multifunctional enzyme that catalyzes the SAM-dependent methylations of uroporphyrinogen III at position C-2 and C-7 to form precorrin-2 via precorrin-1. Then it catalyzes the NAD-dependent ring dehydrogenation of precorrin-2 to yield sirohydrochlorin. Finally, it catalyzes the ferrochelation of sirohydrochlorin to yield siroheme. This Baumannia cicadellinicola subsp. Homalodisca coagulata protein is Siroheme synthase.